A 171-amino-acid chain; its full sequence is Auxin-responsive protein IAA33 (171 aa).

Composition is skewed to polar residues over residues 1 to 11 (MNSFEPQSQDS) and 19 to 32 (DNST…TTTP). The segment at 1–51 (MNSFEPQSQDSLQRRFHQDNSTTQQPRDTTTPFIPKPASKNHNNSNSSSGA) is disordered. The segment covering 40–49 (KNHNNSNSSS) has biased composition (low complexity). The PB1 domain occupies 72–162 (VPPVTVVLEG…KRIRILPVKG (91 aa)).

This sequence belongs to the Aux/IAA family. As to quaternary structure, homodimers and heterodimers.

It localises to the nucleus. In terms of biological role, aux/IAA proteins are short-lived transcriptional factors that function as repressors of early auxin response genes at low auxin concentrations. Repression is thought to result from the interaction with auxin response factors (ARFs), proteins that bind to the auxin-responsive promoter element (AuxRE). Formation of heterodimers with ARF proteins may alter their ability to modulate early auxin response genes expression. The chain is Auxin-responsive protein IAA33 (IAA33) from Arabidopsis thaliana (Mouse-ear cress).